Reading from the N-terminus, the 326-residue chain is Undecaprenyl-phosphate 4-deoxy-4-formamido-L-arabinose transferase (326 aa).

2 helical membrane passes run 235–255 and 270–290; these read LLSV…VLLI and VFTL…GMGL.

This sequence belongs to the glycosyltransferase 2 family.

Its subcellular location is the cell inner membrane. It carries out the reaction UDP-4-deoxy-4-formamido-beta-L-arabinose + di-trans,octa-cis-undecaprenyl phosphate = 4-deoxy-4-formamido-alpha-L-arabinopyranosyl di-trans,octa-cis-undecaprenyl phosphate + UDP. It participates in glycolipid biosynthesis; 4-amino-4-deoxy-alpha-L-arabinose undecaprenyl phosphate biosynthesis; 4-amino-4-deoxy-alpha-L-arabinose undecaprenyl phosphate from UDP-4-deoxy-4-formamido-beta-L-arabinose and undecaprenyl phosphate: step 1/2. It functions in the pathway bacterial outer membrane biogenesis; lipopolysaccharide biosynthesis. Functionally, catalyzes the transfer of 4-deoxy-4-formamido-L-arabinose from UDP to undecaprenyl phosphate. The modified arabinose is attached to lipid A and is required for resistance to polymyxin and cationic antimicrobial peptides. In Serratia proteamaculans (strain 568), this protein is Undecaprenyl-phosphate 4-deoxy-4-formamido-L-arabinose transferase.